Reading from the N-terminus, the 678-residue chain is MVPSTFSRLKAARCLPVVLAALIFAGCGTHTPDQSTAYMQGTAQADSAFYLQQMQQSSDDTRINWQLLAIRALVKEGKTGQAVELFNQLPQELNDSQRREKTLLAAEIKLAQKDFAGAQNLLAKITPADLEQNQQARYWQAKIDASQGRPSIDLLRALIAQEPLLGAKEKQQNIDATWQALSSMTQEQANTLVINADENILQGWLDLQRVWFDNRNDPDMMKAGIADWQKRYPNNPGAKMLPTQLVNVKAFKPASTNKIALLLPLNGQAAVFGRTIQQGFEAAKNIGTQPVAAQVAAAPAADVAEQPQPQTADSVASPAQASVSDLTGDQPAAQPVPVSAPATSTAAVSAPANPSAELKIYDTSSQPLSQILSQVQQDGASIVVGPLLKNNVEELLKSNTPLNVLALNQPENIENRVNICYFALSPEDEARDAARHIRDQGKQAPLVLIPRSALGDRVANAFAQEWQKLGGGTVLQQKFGSTSELRAGVNGGSGIALTGSPITPRATTDSGMTTNNPTLQTTPTDDQFTNNGGRVDAVYIVATPGEIAFIKPMIAMRNGSQSGATLYASSRSAQGTAGPDFRLEMEGLQYSEIPMLAGGNLPLMQQALSAVNNDYSLARMYAMGVDAWSLANHFSQMRQVQGFEINGNTGSLTANPDCVINRKLSWLQYQQGQVVPAS.

The N-terminal stretch at 1 to 26 is a signal peptide; that stretch reads MVPSTFSRLKAARCLPVVLAALIFAG. A lipid anchor (N-palmitoyl cysteine) is attached at Cys27. Residue Cys27 is the site of S-diacylglycerol cysteine attachment. Positions 300-310 are enriched in low complexity; the sequence is AADVAEQPQPQ. Disordered stretches follow at residues 300-340 and 496-528; these read AADV…PVSA and ALTG…DDQF. Polar residues predominate over residues 311-327; it reads TADSVASPAQASVSDLT. Low complexity-rich tracts occupy residues 330–340 and 513–528; these read QPAAQPVPVSA and TTNN…DDQF.

It belongs to the LpoA family. In terms of assembly, interacts with PBP1a.

The protein resides in the cell outer membrane. In terms of biological role, regulator of peptidoglycan synthesis that is essential for the function of penicillin-binding protein 1A (PBP1a). This is Penicillin-binding protein activator LpoA from Shigella flexneri serotype X (strain 2002017).